The chain runs to 211 residues: Potassium-transporting ATPase KdpC subunit (211 aa).

Residues 13-35 (VVTMVLTGLLYPLAVTGLAQLLF) form a helical membrane-spanning segment.

Belongs to the KdpC family. As to quaternary structure, the system is composed of three essential subunits: KdpA, KdpB and KdpC.

Its subcellular location is the cell inner membrane. Part of the high-affinity ATP-driven potassium transport (or Kdp) system, which catalyzes the hydrolysis of ATP coupled with the electrogenic transport of potassium into the cytoplasm. This subunit acts as a catalytic chaperone that increases the ATP-binding affinity of the ATP-hydrolyzing subunit KdpB by the formation of a transient KdpB/KdpC/ATP ternary complex. The protein is Potassium-transporting ATPase KdpC subunit of Myxococcus xanthus (strain DK1622).